The following is an 828-amino-acid chain: Protein ELFN1 (828 aa).

The first 27 residues, 1–27, serve as a signal peptide directing secretion; sequence MAGRGWGALWVCVAAATLLHAGGLARA. Topologically, residues 28-418 are extracellular; that stretch reads DCWLIEGDKG…VPSPSTATHY (391 aa). Asn-59 is a glycosylation site (N-linked (GlcNAc...) asparagine). LRR repeat units follow at residues 61–82, 85–106, 109–130, 133–154, and 157–178; these read TIVDLRLNENRIRSVQYASLSR, NLTYLNLTKNEIGYIEDGAFSG, NLQVLQLGYNRLRNLTEGMLRG, KLEYLYLQANLIEVVMASSFWE, and NIVNIDLSMNRIQQLNSGTFAG. 3 N-linked (GlcNAc...) asparagine glycosylation sites follow: Asn-85, Asn-90, and Asn-122. The region spanning 190-252 is the LRRCT domain; that stretch reads NPFYCSCELL…LSKLQSVCTE (63 aa). The N-linked (GlcNAc...) asparagine glycan is linked to Asn-210. Residues 259 to 291 are disordered; the sequence is VVGPPRPASGRSQPGRSPPPPPPPEPSDMPCAD. Residues 274-285 show a composition bias toward pro residues; it reads RSPPPPPPPEPS. In terms of domain architecture, Fibronectin type-III spans 312–399; sequence QAEARPLIKV…HNHTCLTICL (88 aa). Residues 318 to 342 form an LRR 6 repeat; the sequence is LIKVKQLTQNSATITVQLPSPFHRM. A glycan (N-linked (GlcNAc...) asparagine) is linked at Asn-376. Residues 419–439 form a helical membrane-spanning segment; it reads IMTILGCLFGMVLVLGAVYYC. The Cytoplasmic portion of the chain corresponds to 440-828; it reads LRRRRRQEEK…WKGVSAQHKS (389 aa). At Ser-461 the chain carries Phosphoserine. 3 disordered regions span residues 517–552, 624–649, and 696–732; these read TPKASKGSYMEVRTGDPPERRDCELGRPGPDSQSSV, LQRHHSVEAAGPPRASTSSSGSVRSP, and KGRQYGEHRHSYPGSHPAEPPAPPGPPPPPPHEGLGR. Basic and acidic residues predominate over residues 529 to 541; that stretch reads RTGDPPERRDCEL. A compositionally biased stretch (low complexity) spans 632–649; sequence AAGPPRASTSSSGSVRSP. Ser-645 is subject to Phosphoserine. The span at 696–705 shows a compositional bias: basic and acidic residues; sequence KGRQYGEHRH. Positions 713–727 are enriched in pro residues; it reads AEPPAPPGPPPPPPH.

As to quaternary structure, interacts with PPP1CA.

It is found in the membrane. The protein localises to the cell projection. The protein resides in the dendrite. Its function is as follows. Postsynaptic protein that regulates circuit dynamics in the central nervous system by modulating the temporal dynamics of interneuron recruitment. Specifically present in excitatory synapses onto oriens-lacunosum molecular (OLM) interneurons and acts as a regulator of presynaptic release probability to direct the formation of highly facilitating pyramidal-OLM synapses. Inhibits phosphatase activity of protein phosphatase 1 (PP1) complexes. This Homo sapiens (Human) protein is Protein ELFN1 (ELFN1).